The following is a 118-amino-acid chain: Succinate dehydrogenase assembly factor 4, mitochondrial (118 aa).

The N-terminal 30 residues, 1–30 (MQSVTRQTARVLPQMGKQVSYLSTSGAWRA), are a transit peptide targeting the mitochondrion. The tract at residues 65–118 (GKLDEFSRHPYQEKEPLKPWPNQTNPYTGEIGGPAGPEPTRYGDWERKGRVSDF) is disordered. Composition is skewed to basic and acidic residues over residues 66-81 (KLDEFSRHPYQEKEPL) and 105-118 (RYGDWERKGRVSDF).

The protein belongs to the SDHAF4 family. In terms of assembly, interacts with SdhA in its FAD-bound form.

It localises to the mitochondrion matrix. In terms of biological role, plays an essential role in the assembly of succinate dehydrogenase (SDH), an enzyme complex (also referred to as respiratory complex II) that is a component of both the tricarboxylic acid (TCA) cycle and the mitochondrial electron transport chain, and which couples the oxidation of succinate to fumarate with the reduction of ubiquinone (coenzyme Q) to ubiquinol. Binds to the flavoprotein subunit SdhA in its FAD-bound form, blocking the generation of excess reactive oxygen species (ROS) and facilitating its assembly with the iron-sulfur protein subunit SdhB into the SDH catalytic dimer. In Drosophila melanogaster (Fruit fly), this protein is Succinate dehydrogenase assembly factor 4, mitochondrial.